Reading from the N-terminus, the 684-residue chain is Threonine--tRNA ligase (684 aa).

Residues 1–64 (MTAPNPSSLV…ESDTEVEPVA (64 aa)) form the TGS domain. The interval 261–567 (DHRKLGVELD…LTEHYAGAFP (307 aa)) is catalytic. Residues C366, H417, and H544 each contribute to the Zn(2+) site.

This sequence belongs to the class-II aminoacyl-tRNA synthetase family. Homodimer. Zn(2+) serves as cofactor.

The protein resides in the cytoplasm. It carries out the reaction tRNA(Thr) + L-threonine + ATP = L-threonyl-tRNA(Thr) + AMP + diphosphate + H(+). Functionally, catalyzes the attachment of threonine to tRNA(Thr) in a two-step reaction: L-threonine is first activated by ATP to form Thr-AMP and then transferred to the acceptor end of tRNA(Thr). Also edits incorrectly charged L-seryl-tRNA(Thr). The sequence is that of Threonine--tRNA ligase from Mycobacteroides abscessus (strain ATCC 19977 / DSM 44196 / CCUG 20993 / CIP 104536 / JCM 13569 / NCTC 13031 / TMC 1543 / L948) (Mycobacterium abscessus).